The following is a 141-amino-acid chain: ATP synthase epsilon chain (141 aa).

Belongs to the ATPase epsilon chain family. F-type ATPases have 2 components, CF(1) - the catalytic core - and CF(0) - the membrane proton channel. CF(1) has five subunits: alpha(3), beta(3), gamma(1), delta(1), epsilon(1). CF(0) has three main subunits: a, b and c.

The protein localises to the cell inner membrane. In terms of biological role, produces ATP from ADP in the presence of a proton gradient across the membrane. This Paraburkholderia phymatum (strain DSM 17167 / CIP 108236 / LMG 21445 / STM815) (Burkholderia phymatum) protein is ATP synthase epsilon chain.